Here is a 235-residue protein sequence, read N- to C-terminus: Leucyl/phenylalanyl-tRNA--protein transferase (235 aa).

It belongs to the L/F-transferase family.

The protein resides in the cytoplasm. It catalyses the reaction N-terminal L-lysyl-[protein] + L-leucyl-tRNA(Leu) = N-terminal L-leucyl-L-lysyl-[protein] + tRNA(Leu) + H(+). The catalysed reaction is N-terminal L-arginyl-[protein] + L-leucyl-tRNA(Leu) = N-terminal L-leucyl-L-arginyl-[protein] + tRNA(Leu) + H(+). It carries out the reaction L-phenylalanyl-tRNA(Phe) + an N-terminal L-alpha-aminoacyl-[protein] = an N-terminal L-phenylalanyl-L-alpha-aminoacyl-[protein] + tRNA(Phe). Its function is as follows. Functions in the N-end rule pathway of protein degradation where it conjugates Leu, Phe and, less efficiently, Met from aminoacyl-tRNAs to the N-termini of proteins containing an N-terminal arginine or lysine. In Methylococcus capsulatus (strain ATCC 33009 / NCIMB 11132 / Bath), this protein is Leucyl/phenylalanyl-tRNA--protein transferase.